The primary structure comprises 147 residues: MVALFKSSLGRPEQHQTPQIRISPASSNVEHSEKQPRRDFRVKKYVAPGFSQLNWSKLVASGQNLSGVEKPIPVTKEELAKHKTKEDCWIAIRGKVYNVSAYLPYHPAGQKRILDYAGRDATVIFMKFHAWVNEEALLKTSFVGFLV.

The tract at residues 1–37 is disordered; that stretch reads MVALFKSSLGRPEQHQTPQIRISPASSNVEHSEKQPR. The span at 15–29 shows a compositional bias: polar residues; sequence HQTPQIRISPASSNV. Residues 71-147 enclose the Cytochrome b5 heme-binding domain; that stretch reads PIPVTKEELA…LKTSFVGFLV (77 aa). His106 and His129 together coordinate heme.

It belongs to the cytochrome b5 family.

This is an uncharacterized protein from Schizosaccharomyces pombe (strain 972 / ATCC 24843) (Fission yeast).